The chain runs to 67 residues: Conotoxin Cl6.7 (67 aa).

The signal sequence occupies residues 1–24 (MKVTAVLMVAVLVLTACQLTTANT). A propeptide spanning residues 25–39 (TDYVRRIPARKSTMS) is cleaved from the precursor. 3 disulfides stabilise this stretch: cysteine 43/cysteine 58, cysteine 50/cysteine 62, and cysteine 57/cysteine 66.

The protein belongs to the conotoxin O1 superfamily. Expressed by the venom duct.

The protein resides in the secreted. This is Conotoxin Cl6.7 from Californiconus californicus (California cone).